The sequence spans 114 residues: Large ribosomal subunit protein bL21 (114 aa).

Belongs to the bacterial ribosomal protein bL21 family. As to quaternary structure, part of the 50S ribosomal subunit. Contacts protein L20.

This protein binds to 23S rRNA in the presence of protein L20. This is Large ribosomal subunit protein bL21 from Protochlamydia amoebophila (strain UWE25).